The following is a 690-amino-acid chain: MTKDYLFEIGTEEMPAHVVSRSVKQLADRTKKYLKENGLSFKDIKTYSTPRRLTILVEDLAEKQDDIDEVKKGPAKKIAQDKDGNWTKAAQGFARGQGMTTDDIYFEELKGTEYAYVHVQKEGKKASDILMGMSDIIKAMTFPTKMRWDSNDFEFVRPIHWMVSLLGSEVVPVKLLDVVAGRKTQGHRFLGDSVVLANADDYEEALKSQYVIADADERKGMILNQIQELVAQHNWKVNIDKGLLEEVTNLVEYPTVFAGSFDEKYLNIPDEVLITSMKDNQRYFEVYDENGKLINHFIAVRNGNSEYLDNVIAGNEKVLVARLDDAQFFYDEDKKYPLAHFVDKLKNVSFHDKIGSVAEHMARVHIIGDYLGKKFNISETEMKDFDRVSDIYKFDLVTSMVGEFAELQGVMGMHYARLTGEDENVSVAIKESYMPTSAEGDLPSTTVGSLLSIADKLDTIISFFGAGMIPSSSNDPYALRRNAYGIVRILLNEGWSLPVKDVLPELIQLLSGKTAAKLPKDAEAENEIADFIRDRVKQQLQVEKYDYDVIDAVLASSQQDPIQILAAAKTLQMHHDDADFKPVVESLTRITNILKKAKYRNAAKVDESLFQDVSEEELNAGVNALEENTDLSIADLYKGFVELQPVINNYFESNMILDKDEKVKNNRLAQLLKVNNLADRMGDLSKLVIK.

Belongs to the class-II aminoacyl-tRNA synthetase family. Tetramer of two alpha and two beta subunits.

Its subcellular location is the cytoplasm. The enzyme catalyses tRNA(Gly) + glycine + ATP = glycyl-tRNA(Gly) + AMP + diphosphate. The sequence is that of Glycine--tRNA ligase beta subunit from Lactobacillus gasseri (strain ATCC 33323 / DSM 20243 / BCRC 14619 / CIP 102991 / JCM 1131 / KCTC 3163 / NCIMB 11718 / NCTC 13722 / AM63).